The chain runs to 251 residues: MAKSSLSLNWSLLVLLNFLGATLSTGTDSLSCELTFNHRTLHGQCSVNGKTLLDFGDKKHEGNATEMCADLSQSLRELSEGMRNQQSGNDALNVTTQSQYNQGEFIGGFWAINTDEQHSIYFYPLNMTWRESHSDNSSAMEHWKNKNLEKDIRNVLIIYFSRCLNKLSPHFREMPKSKIKVLDTTQNTNTTQIHPTVNNSQHNSDTQGLSFTWIVIICIGGIVSFMAFMVFAWCMLKKKKGALCCSSSSTT.

Residues 1 to 24 form the signal peptide; it reads MAKSSLSLNWSLLVLLNFLGATLS. Topologically, residues 25–212 are extracellular; sequence TGTDSLSCEL…NSDTQGLSFT (188 aa). 4 N-linked (GlcNAc...) asparagine glycosylation sites follow: N63, N93, N126, and N189. Residues 213–233 traverse the membrane as a helical segment; it reads WIVIICIGGIVSFMAFMVFAW. At 234–251 the chain is on the cytoplasmic side; sequence CMLKKKKGALCCSSSSTT.

It belongs to the NKG2D ligand family. In terms of tissue distribution, in strain C57BL/6J, strongly expressed in cardiac muscle and skeletal muscle, with lower expression levels in spleen, liver, kidney and thymus. In strain BALB/cJ, weakly expressed in cardiac muscle, spleen, kidney and thymus.

The protein localises to the cell membrane. In terms of biological role, ligand for the KLRK1 immunosurveillance receptor. Binding to KLRK1 stimulates cell lysis in vitro. The polypeptide is Histocompatibility antigen 60b (Mus musculus (Mouse)).